A 164-amino-acid polypeptide reads, in one-letter code: UPF0304 protein Ent638_2838 (164 aa).

This sequence belongs to the UPF0304 family.

The chain is UPF0304 protein Ent638_2838 from Enterobacter sp. (strain 638).